A 198-amino-acid chain; its full sequence is Holliday junction branch migration complex subunit RuvA (198 aa).

Residues 1 to 63 are domain I; that stretch reads MYDYIKGQLT…EDAQLLFGFH (63 aa). Residues 64 to 142 are domain II; sequence SEEEKDVFLK…EAPKEESSKP (79 aa). The segment at 143–147 is flexible linker; the sequence is PKAKQ. The segment at 148-198 is domain III; the sequence is QGNEQLDEAVEALLALGYKATELKKIRAFFEGTSETAEQYIKSALKMLMKG.

Belongs to the RuvA family. Homotetramer. Forms an RuvA(8)-RuvB(12)-Holliday junction (HJ) complex. HJ DNA is sandwiched between 2 RuvA tetramers; dsDNA enters through RuvA and exits via RuvB. An RuvB hexamer assembles on each DNA strand where it exits the tetramer. Each RuvB hexamer is contacted by two RuvA subunits (via domain III) on 2 adjacent RuvB subunits; this complex drives branch migration. In the full resolvosome a probable DNA-RuvA(4)-RuvB(12)-RuvC(2) complex forms which resolves the HJ.

Its subcellular location is the cytoplasm. Functionally, the RuvA-RuvB-RuvC complex processes Holliday junction (HJ) DNA during genetic recombination and DNA repair, while the RuvA-RuvB complex plays an important role in the rescue of blocked DNA replication forks via replication fork reversal (RFR). RuvA specifically binds to HJ cruciform DNA, conferring on it an open structure. The RuvB hexamer acts as an ATP-dependent pump, pulling dsDNA into and through the RuvAB complex. HJ branch migration allows RuvC to scan DNA until it finds its consensus sequence, where it cleaves and resolves the cruciform DNA. The chain is Holliday junction branch migration complex subunit RuvA from Streptococcus equi subsp. equi (strain 4047).